The following is a 218-amino-acid chain: Probable nicotinate-nucleotide adenylyltransferase (218 aa).

Belongs to the NadD family.

It carries out the reaction nicotinate beta-D-ribonucleotide + ATP + H(+) = deamido-NAD(+) + diphosphate. It functions in the pathway cofactor biosynthesis; NAD(+) biosynthesis; deamido-NAD(+) from nicotinate D-ribonucleotide: step 1/1. Catalyzes the reversible adenylation of nicotinate mononucleotide (NaMN) to nicotinic acid adenine dinucleotide (NaAD). This Burkholderia cenocepacia (strain ATCC BAA-245 / DSM 16553 / LMG 16656 / NCTC 13227 / J2315 / CF5610) (Burkholderia cepacia (strain J2315)) protein is Probable nicotinate-nucleotide adenylyltransferase.